The following is a 45-amino-acid chain: Photosystem II reaction center protein K (45 aa).

Positions Met-1–Ala-8 are excised as a propeptide. Residues Leu-24–Phe-44 traverse the membrane as a helical segment.

The protein belongs to the PsbK family. PSII is composed of 1 copy each of membrane proteins PsbA, PsbB, PsbC, PsbD, PsbE, PsbF, PsbH, PsbI, PsbJ, PsbK, PsbL, PsbM, PsbT, PsbX, PsbY, PsbZ, Psb30/Ycf12, peripheral proteins PsbO, CyanoQ (PsbQ), PsbU, PsbV and a large number of cofactors. It forms dimeric complexes.

It is found in the cellular thylakoid membrane. Its function is as follows. One of the components of the core complex of photosystem II (PSII). PSII is a light-driven water:plastoquinone oxidoreductase that uses light energy to abstract electrons from H(2)O, generating O(2) and a proton gradient subsequently used for ATP formation. It consists of a core antenna complex that captures photons, and an electron transfer chain that converts photonic excitation into a charge separation. The chain is Photosystem II reaction center protein K from Synechococcus elongatus (strain ATCC 33912 / PCC 7942 / FACHB-805) (Anacystis nidulans R2).